Reading from the N-terminus, the 233-residue chain is C-type lectin domain family 2 member D2 (233 aa).

The tract at residues 1–34 (MPSSAHLQDAPPLLSRTLTQDEEQTSLRQSSSCG) is disordered. Over 1–76 (MPSSAHLQDA…SPESPAKLPC (76 aa)) the chain is Cytoplasmic. Residues 77–97 (CYGVIMVLSVAVVALSVALSV) form a helical; Signal-anchor for type II membrane protein membrane-spanning segment. The Extracellular segment spans residues 98–233 (KKTPQILTVK…KPNSYTSQCQ (136 aa)). One can recognise a C-type lectin domain in the interval 119–228 (VGNKCYYFNE…KSICSKPNSY (110 aa)). Asn-132 is a glycosylation site (N-linked (GlcNAc...) asparagine).

The protein localises to the cell membrane. In terms of biological role, lectin-type cell surface receptor. The protein is C-type lectin domain family 2 member D2 (Clec2d2) of Rattus norvegicus (Rat).